The chain runs to 191 residues: Dephospho-CoA kinase (191 aa).

Residues 3-191 (AIGITGSYAS…KLIKDLECRV (189 aa)) enclose the DPCK domain. 11 to 16 (ASGKTF) serves as a coordination point for ATP.

It belongs to the CoaE family.

The protein localises to the cytoplasm. It catalyses the reaction 3'-dephospho-CoA + ATP = ADP + CoA + H(+). It participates in cofactor biosynthesis; coenzyme A biosynthesis; CoA from (R)-pantothenate: step 5/5. Catalyzes the phosphorylation of the 3'-hydroxyl group of dephosphocoenzyme A to form coenzyme A. This Rickettsia conorii (strain ATCC VR-613 / Malish 7) protein is Dephospho-CoA kinase.